The chain runs to 265 residues: 3-methyl-2-oxobutanoate hydroxymethyltransferase (265 aa).

Mg(2+) contacts are provided by Asp45 and Asp84. 3-methyl-2-oxobutanoate contacts are provided by residues 45 to 46, Asp84, and Lys112; that span reads DS. Glu114 provides a ligand contact to Mg(2+). Glu181 (proton acceptor) is an active-site residue.

The protein belongs to the PanB family. In terms of assembly, homodecamer; pentamer of dimers. Requires Mg(2+) as cofactor.

Its subcellular location is the cytoplasm. It carries out the reaction 3-methyl-2-oxobutanoate + (6R)-5,10-methylene-5,6,7,8-tetrahydrofolate + H2O = 2-dehydropantoate + (6S)-5,6,7,8-tetrahydrofolate. The protein operates within cofactor biosynthesis; (R)-pantothenate biosynthesis; (R)-pantoate from 3-methyl-2-oxobutanoate: step 1/2. In terms of biological role, catalyzes the reversible reaction in which hydroxymethyl group from 5,10-methylenetetrahydrofolate is transferred onto alpha-ketoisovalerate to form ketopantoate. This chain is 3-methyl-2-oxobutanoate hydroxymethyltransferase, found in Pectobacterium carotovorum subsp. carotovorum (strain PC1).